A 106-amino-acid chain; its full sequence is Acylphosphatase-2 (106 aa).

Residues 16-106 (SVDYEVFGTV…LEYSDFSIRY (91 aa)) enclose the Acylphosphatase-like domain. Catalysis depends on residues arginine 31 and asparagine 49. The residue at position 100 (serine 100) is a Phosphoserine.

It belongs to the acylphosphatase family.

The catalysed reaction is an acyl phosphate + H2O = a carboxylate + phosphate + H(+). This Mus musculus (Mouse) protein is Acylphosphatase-2 (Acyp2).